A 156-amino-acid chain; its full sequence is Small ribosomal subunit protein uS7 (156 aa).

Belongs to the universal ribosomal protein uS7 family. Part of the 30S ribosomal subunit. Contacts proteins S9 and S11.

Its function is as follows. One of the primary rRNA binding proteins, it binds directly to 16S rRNA where it nucleates assembly of the head domain of the 30S subunit. Is located at the subunit interface close to the decoding center, probably blocks exit of the E-site tRNA. This chain is Small ribosomal subunit protein uS7, found in Geobacillus thermodenitrificans (strain NG80-2).